Here is a 307-residue protein sequence, read N- to C-terminus: tRNA dimethylallyltransferase (307 aa).

Residue 9–16 participates in ATP binding; it reads GATGTGKS. A substrate-binding site is contributed by 11 to 16; the sequence is TGTGKS.

Belongs to the IPP transferase family. In terms of assembly, monomer. Mg(2+) serves as cofactor.

It catalyses the reaction adenosine(37) in tRNA + dimethylallyl diphosphate = N(6)-dimethylallyladenosine(37) in tRNA + diphosphate. Its function is as follows. Catalyzes the transfer of a dimethylallyl group onto the adenine at position 37 in tRNAs that read codons beginning with uridine, leading to the formation of N6-(dimethylallyl)adenosine (i(6)A). The polypeptide is tRNA dimethylallyltransferase (Clavibacter sepedonicus (Clavibacter michiganensis subsp. sepedonicus)).